A 198-amino-acid chain; its full sequence is Probable chorismate pyruvate-lyase (198 aa).

3 residues coordinate substrate: Arg76, Leu114, and Glu172.

Belongs to the UbiC family.

It is found in the cytoplasm. The enzyme catalyses chorismate = 4-hydroxybenzoate + pyruvate. The protein operates within cofactor biosynthesis; ubiquinone biosynthesis. Removes the pyruvyl group from chorismate, with concomitant aromatization of the ring, to provide 4-hydroxybenzoate (4HB) for the ubiquinone pathway. The chain is Probable chorismate pyruvate-lyase from Bordetella avium (strain 197N).